The primary structure comprises 674 residues: MASTTTMRLALFSVLTLLSFHAVVSVTPLHVQHPLDPLTKEEFLAVQTIVQNKYPISNNRLAFHYIGLDDPEKDHVLRYETHPTLVSIPRKIFVVAIINSQTHEILINLRIRSIVSDNIHNGYGFPILSVDEQSLAIKLPLKYPPFIDSVKKRGLNLSEIVCSSFTMGWFGEEKNVRTVRLDCFMKESTVNIYVRPITGITIVADLDLMKIVEYHDRDIEAVPTAENTEYQVSKQSPPFGPKQHSLTSHQPQGPGFQINGHSVSWANWKFHIGFDVRAGIVISLASIYDLEKHKSRRVLYKGYISELFVPYQDPTEEFYFKTFFDSGEFGFGLSTVSLIPNRDCPPHAQFIDTYVHSANGTPILLKNAICVFEQYGNIMWRHTENGIPNESIEESRTEVNLIVRTIVTVGNYDNVIDWEFKASGSIKPSIALSGILEIKGTNIKHKDEIKEDLHGKLVSANSIGIYHDHFYIYYLDFDIDGTHNSFEKTSLKTVRIKDGSSKRKSYWTTETQTAKTESDAKITIGLAPAELVVVNPNIKTAVGNEVGYRLIPAIPAHPLLTEDDYPQIRGAFTNYNVWVTAYNRTEKWAGGLYVDHSRGDDTLAVWTKQNREIVNKDIVMWHVVGIHHVPAQEDFPIMPLLSTSFELRPTNFFERNPVLKTLSPRDVAWPGCSN.

The N-terminal stretch at 1-25 (MASTTTMRLALFSVLTLLSFHAVVS) is a signal peptide. A glycan (N-linked (GlcNAc...) asparagine) is linked at asparagine 156. An intrachain disulfide couples cysteine 162 to cysteine 183. The segment covering 226 to 236 (ENTEYQVSKQS) has biased composition (polar residues). The tract at residues 226–251 (ENTEYQVSKQSPPFGPKQHSLTSHQP) is disordered. 323 to 334 (FFDSGEFGFGLS) is a substrate binding site. Aspartate 325 serves as the catalytic Proton acceptor. A disulfide bond links cysteine 344 and cysteine 370. Asparagine 389 carries N-linked (GlcNAc...) asparagine glycosylation. 409 to 414 (VGNYDN) is a binding site for substrate. Tyrosine 412 functions as the Schiff-base intermediate with substrate; via topaquinone in the catalytic mechanism. Residue tyrosine 412 is modified to 2',4',5'-topaquinone. Positions 467 and 469 each coordinate Cu cation. Mn(2+) contacts are provided by aspartate 476, phenylalanine 477, aspartate 478, aspartate 617, and isoleucine 618. Residue histidine 628 coordinates Cu cation.

This sequence belongs to the copper/topaquinone oxidase family. Homodimer. It depends on Cu cation as a cofactor. Mn(2+) serves as cofactor. Requires L-topaquinone as cofactor. Post-translationally, topaquinone (TPQ) is generated by copper-dependent autoxidation of a specific tyrosyl residue.

It carries out the reaction a primary methyl amine + O2 + H2O = an aldehyde + H2O2 + NH4(+). The sequence is that of Primary amine oxidase from Pisum sativum (Garden pea).